Here is a 391-residue protein sequence, read N- to C-terminus: Trehalose-phosphate phosphatase (391 aa).

D147 functions as the Nucleophile in the catalytic mechanism. D147, D149, and D330 together coordinate Mg(2+). D147–D149 lines the substrate pocket.

This sequence belongs to the trehalose phosphatase family. The cofactor is Mg(2+).

It carries out the reaction alpha,alpha-trehalose 6-phosphate + H2O = alpha,alpha-trehalose + phosphate. The protein operates within glycan biosynthesis; trehalose biosynthesis. Functionally, removes the phosphate from trehalose 6-phosphate to produce free trehalose. This is Trehalose-phosphate phosphatase (otsB) from Mycolicibacterium paratuberculosis (strain ATCC BAA-968 / K-10) (Mycobacterium paratuberculosis).